Reading from the N-terminus, the 48-residue chain is U-actitoxin-Cgg3 (48 aa).

Intrachain disulfides connect Cys-5–Cys-41, Cys-7–Cys-33, and Cys-23–Cys-42. Ser-46 bears the Serine amide mark. Residues Gly-47–Arg-48 constitute a propeptide, removed in mature form.

It belongs to the sea anemone type 3 (BDS) potassium channel toxin family.

It localises to the secreted. In terms of biological role, neurotoxin that induces paralysis when injected into crabs. May function in antimicrobial activity as it displays inhibitory activity towards the B.licheniformis enzyme subtilisin A (SUBTA) and the recombinant S.maltophilia protease 1 (rStmPr1) enzyme. Also displays inhibitory activity against various proteases including the porcine pancreatic elastase (PPE) and proteinase K (PK). The polypeptide is U-actitoxin-Cgg3 (Condylactis gigantea (Giant Caribbean anemone)).